Here is a 159-residue protein sequence, read N- to C-terminus: MKLLSKIMIIALATSMLQACNGPGGMNKQGTGTLLGGAGGALLGSQFGKGTGQLVGVGVGALLGAVLGGQIGAGMDEQDRRLAELTSQRALETAPSGSNVEWRNPDNGNYGYVTPNKTYRNSTGQYCREYTQTVVIGGKQQKAYGNACRQPDGQWQVVN.

A signal peptide spans 1–19 (MKLLSKIMIIALATSMLQA). Cys-20 is lipidated: N-palmitoyl cysteine. Cys-20 carries S-diacylglycerol cysteine lipidation.

This sequence belongs to the rickettsiale 17 kDa surface antigen family.

The protein localises to the cell outer membrane. This chain is 17 kDa surface antigen (omp), found in Rickettsia japonica (strain ATCC VR-1363 / YH).